The chain runs to 359 residues: Putative nucleotidyltransferase MAB21L1 (359 aa).

Residues 23–24 and 63–66 contribute to the a ribonucleoside 5'-triphosphate site; these read RK and YEGL. Residues Glu-73 and Glu-75 each coordinate Mg(2+). Residues Lys-248 and 252 to 255 contribute to the a ribonucleoside 5'-triphosphate site; that span reads SLLK.

Belongs to the mab-21 family. As to quaternary structure, monomer. Homodecamer; composed of 2 back to back homopentamers. The protein may exist as monomer in solution and oiligomerizes upon ligand binding.

It is found in the nucleus. In terms of biological role, putative nucleotidyltransferase required for several aspects of embryonic development including normal development of the eye. It is unclear whether it displays nucleotidyltransferase activity in vivo. Binds single-stranded RNA (ssRNA). The protein is Putative nucleotidyltransferase MAB21L1 (mab21l1) of Xenopus tropicalis (Western clawed frog).